The sequence spans 892 residues: Ice-binding protein 1 (892 aa).

Residues 1 to 23 (MNHSIKKTYLVFTMLLGFILLAG) form the signal peptide. A lipid anchor (N-palmitoyl cysteine) is attached at cysteine 24. Residue cysteine 24 is the site of S-diacylglycerol cysteine attachment. BIG2 domains lie at 43 to 111 (TSIA…ITAS), 134 to 205 (TALA…SLGS), 221 to 288 (SIAL…ITAD), 306 to 386 (TSIM…TVTV), 392 to 471 (TSIA…TNLT), 478 to 558 (NSIV…NLTV), and 565 to 638 (SIDV…QASL). Residues 866 to 869 (TGAN) carry the Ice-binding site motif (T-A/G-X-T/N) motif.

The protein belongs to the ice-binding protein family.

Its subcellular location is the cell outer membrane. Ice-binding adhesion protein that adsorbs this bacterium onto ice to maintain a favorable position in its aquatic habitat. Inhibits growth of the ice crystals. Has high thermal hysteresis (TH) activity, which is the ability to lower the freezing point of an aqueous solution below its melting point. The TH activity of this protein is approximately 1.4 degrees Celsius at 25 uM and little below 2 degrees Celsius at 80 uM. This Shewanella frigidimarina (strain NCIMB 400) protein is Ice-binding protein 1.